A 158-amino-acid chain; its full sequence is Anti-tumor lectin (158 aa).

Residue Gln1 is modified to Blocked amino end (Gln). The Galectin domain occupies 12–155; sequence TSVDLAAPVT…STVVEAVTYT (144 aa). Asn43, His59, Arg63, Asn72, Arg74, Trp80, and Glu83 together coordinate N-acetyl-alpha-neuraminyl-(2-&gt;3)-beta-D-galactosyl-(1-&gt;4)-beta-D-glucose.

As to quaternary structure, homodimer. As to expression, detected in the fruiting body.

Its function is as follows. Anti-tumor lectin with DNase activity. Inhibits the growth of several tumor cell lines in vitro. Induces lymphocyte infiltration and necrosis of tumor cells in a mouse tumor model. Induces apoptosis in HeLa cells. Binds N-acetylneuraminyl lactose (N-acetyl-alpha-neuraminyl-(2-&gt;3)-beta-D-galactosyl-(1-&gt;4)-beta-D-glucose). The protein is Anti-tumor lectin of Cyclocybe aegerita (Black poplar mushroom).